The following is a 352-amino-acid chain: Adenosine deaminase (352 aa).

N-acetylalanine is present on A2. The Zn(2+) site is built by H15 and H17. 2 residues coordinate substrate: H17 and D19. Position 54 is an N6-acetyllysine (K54). Position 184 (G184) interacts with substrate. H214 is a binding site for Zn(2+). E217 functions as the Proton donor in the catalytic mechanism. N6-acetyllysine is present on K232. A Zn(2+)-binding site is contributed by D295. Residue D296 participates in substrate binding.

Belongs to the metallo-dependent hydrolases superfamily. Adenosine and AMP deaminases family. In terms of assembly, interacts with DPP4 (via extracellular domain). Interacts with PLG (via Kringle 4 domain); the interaction stimulates PLG activation when in complex with DPP4. Requires Zn(2+) as cofactor. In terms of tissue distribution, detected in brain and liver (at protein level).

The protein resides in the cell membrane. Its subcellular location is the cell junction. It is found in the cytoplasmic vesicle lumen. The protein localises to the cytoplasm. It localises to the lysosome. The catalysed reaction is adenosine + H2O + H(+) = inosine + NH4(+). The enzyme catalyses 2'-deoxyadenosine + H2O + H(+) = 2'-deoxyinosine + NH4(+). It catalyses the reaction cordycepin + H2O + H(+) = 3'-deoxyinosine + NH4(+). In terms of biological role, catalyzes the hydrolytic deamination of adenosine and 2-deoxyadenosine. Plays an important role in purine metabolism and in adenosine homeostasis. Modulates signaling by extracellular adenosine, and so contributes indirectly to cellular signaling events. Acts as a positive regulator of T-cell coactivation, by binding DPP4. Its interaction with DPP4 regulates lymphocyte-epithelial cell adhesion. Enhances dendritic cell immunogenicity by affecting dendritic cell costimulatory molecule expression and cytokines and chemokines secretion. Enhances CD4+ T-cell differentiation and proliferation. Acts as a positive modulator of adenosine receptors ADORA1 and ADORA2A, by enhancing their ligand affinity via conformational change. Stimulates plasminogen activation. Plays a role in male fertility. Plays a protective role in early postimplantation embryonic development. Also responsible for the deamination of cordycepin (3'-deoxyadenosine), a fungal natural product that shows antitumor, antibacterial, antifungal, antivirus, and immune regulation properties. This is Adenosine deaminase (Ada) from Rattus norvegicus (Rat).